Consider the following 260-residue polypeptide: Emerin (260 aa).

Met-1 carries the N-acetylmethionine modification. The LEM domain maps to Met-1 to Arg-45. Phosphoserine occurs at positions 8 and 29. The segment at Arg-46–Gln-224 is interaction with F-actin. Ser-49 is modified (phosphoserine; by PKA). A phosphoserine mark is found at Ser-54, Ser-69, Ser-72, Ser-88, Ser-99, Ser-142, Ser-143, and Ser-144. At Tyr-162 the chain carries Phosphotyrosine. The interval Arg-169 to Ser-188 is interaction with CTNNB1. Phosphoserine occurs at positions 172, 175, and 177. The disordered stretch occupies residues Tyr-184–Arg-206. A compositionally biased stretch (low complexity) spans Ser-187–Ser-201. Residues Val-225 to Tyr-245 form a helical membrane-spanning segment.

In terms of assembly, interacts with lamins A and C, BANF1, GMCL, BCLAF1 and YTHDC1/YT521. Interacts with TMEM43; the interaction retains emerin in the inner nuclear membrane. Interacts with ACTB, SPTAN1, F-actin, CTNNB1 and beta-tubulin. Interacts with SUN1 and SUN2. Interacts with TMEM201. Interacts with NEMP1.

The protein localises to the nucleus inner membrane. Its subcellular location is the nucleus outer membrane. Stabilizes and promotes the formation of a nuclear actin cortical network. Stimulates actin polymerization in vitro by binding and stabilizing the pointed end of growing filaments. Inhibits beta-catenin activity by preventing its accumulation in the nucleus. Acts by influencing the nuclear accumulation of beta-catenin through a CRM1-dependent export pathway. Links centrosomes to the nuclear envelope via a microtubule association. Required for proper localization of non-farnesylated prelamin-A/C. Together with NEMP1, contributes to nuclear envelope stiffness in germ cells. This Rattus norvegicus (Rat) protein is Emerin (Emd).